The sequence spans 525 residues: Chromaffin granule amine transporter (525 aa).

The Cytoplasmic segment spans residues 1–21 (MLRTILDAPQRLLKEGRASRQ). The helical transmembrane segment at 22-42 (LVLVVVFVALLLDNMLFTVVV) threads the bilayer. Topologically, residues 43–138 (PIVPTFLYDM…TGFLEEEITR (96 aa)) are lumenal, vesicle. N-linked (GlcNAc...) asparagine glycans are attached at residues Asn58, Asn87, and Asn104. A helical transmembrane segment spans residues 139 to 158 (VGVLFASKAVMQLLVNPFVG). The Cytoplasmic portion of the chain corresponds to 159-167 (PLTNRIGYH). Residues 168–188 (IPMFAGFVIMFLSTVMFAFSG) form a helical membrane-spanning segment. The Lumenal, vesicle segment spans residues 189–197 (TYTLLFVAR). Residues 198–218 (TLQGIGSSFSSVAGLGMLASV) traverse the membrane as a helical segment. The Cytoplasmic portion of the chain corresponds to 219-227 (YTDDHERGR). The helical transmembrane segment at 228-250 (AMGTALGGLALGLLVGAPFGSVM) threads the bilayer. At 251–256 (YEFVGK) the chain is on the lumenal, vesicle side. The chain crosses the membrane as a helical span at residues 257–279 (SAPFLILAFLALLDGALQLCILQ). The Cytoplasmic segment spans residues 280 to 299 (PSKVSPESAKGTPLFMLLKD). Residues 300–319 (PYILVAAGSICFANMGVAIL) traverse the membrane as a helical segment. Residues 320 to 335 (EPTLPIWMMQTMCSPK) are Lumenal, vesicle-facing. The chain crosses the membrane as a helical span at residues 336-360 (WQLGLAFLPASVSYLIGTNLFGVLA). Residues 361 to 365 (NKMGR) lie on the Cytoplasmic side of the membrane. Residues 366-386 (WLCSLIGMLVVGTSLLCVPLA) traverse the membrane as a helical segment. At 387 to 397 (HNIFGLIGPNA) the chain is on the lumenal, vesicle side. Residues 398–418 (GLGLAIGMVDSSMMPIMGHLV) form a helical membrane-spanning segment. The Cytoplasmic portion of the chain corresponds to 419 to 422 (DLRH). A helical transmembrane segment spans residues 423 to 443 (TSVYGSVYAIADVAFCMGFAI). Residues 444–448 (GPSTG) are Lumenal, vesicle-facing. The helical transmembrane segment at 449–470 (GAIVKAIGFPWLMVITGVINIV) threads the bilayer. Topologically, residues 471–525 (YAPLCYYLRSPPAKEEKLAILSQDCPMETRMYATQKPTKEFPLGEDSDEEPDHEE) are cytoplasmic. Residues 503–525 (ATQKPTKEFPLGEDSDEEPDHEE) form a disordered region. Positions 513-525 (LGEDSDEEPDHEE) are enriched in acidic residues.

The protein belongs to the major facilitator superfamily. Vesicular transporter family. In terms of tissue distribution, expressed primarily in neuroendocrine tissues. Highly expressed in chromaffin cells of the adrenal medulla (at protein level). Detected in peripheral sympathetic ganglia (at protein level). Found in some paracrine cells in stomach and duodenum (at protein level). Expressed in substantia nigra. Expressed in gastrointestinal tract.

It is found in the cytoplasmic vesicle. Its subcellular location is the secretory vesicle membrane. It localises to the secretory vesicle. The protein resides in the synaptic vesicle membrane. The protein localises to the endoplasmic reticulum membrane. It catalyses the reaction serotonin(in) + 2 H(+)(out) = serotonin(out) + 2 H(+)(in). The enzyme catalyses (R)-noradrenaline(in) + 2 H(+)(out) = (R)-noradrenaline(out) + 2 H(+)(in). The catalysed reaction is dopamine(in) + 2 H(+)(out) = dopamine(out) + 2 H(+)(in). Strongly inhibited by reserpine. Also inhibited to a lesser extent by ketanserin and fenfluramine. Not significantly inhibited by tetrabenazine. Functionally, electrogenic antiporter that exchanges one cationic monoamine with two intravesicular protons across the membrane of secretory and synaptic vesicles. Uses the electrochemical proton gradient established by the V-type proton-pump ATPase to accumulate high concentrations of monoamines inside the vesicles prior to their release via exocytosis. Transports catecholamines and indolamines with higher affinity for serotonin. Regulates the transvesicular monoaminergic gradient that determines the quantal size. Mediates presynaptic monoaminergic vesicle transport in the amygdala and prefrontal brain regions related with emotion processing in response to environmental stimuli. Unable to uptake serotonin. The polypeptide is Chromaffin granule amine transporter (SLC18A1) (Homo sapiens (Human)).